The sequence spans 481 residues: Aromatic amino acid aminotransferase DDB_G0272014 (481 aa).

K300 carries the N6-(pyridoxal phosphate)lysine modification.

This sequence belongs to the class-I pyridoxal-phosphate-dependent aminotransferase family. Requires pyridoxal 5'-phosphate as cofactor.

The protein resides in the cytoplasm. It catalyses the reaction an aromatic L-alpha-amino acid + 2-oxoglutarate = an aromatic oxo-acid + L-glutamate. Its function is as follows. Has aromatic amino acid transaminase activity. The protein is Aromatic amino acid aminotransferase DDB_G0272014 of Dictyostelium discoideum (Social amoeba).